The sequence spans 121 residues: UPF0102 protein DSY2577 (121 aa).

Belongs to the UPF0102 family.

The protein is UPF0102 protein DSY2577 of Desulfitobacterium hafniense (strain Y51).